The chain runs to 604 residues: Glutamine--fructose-6-phosphate aminotransferase [isomerizing] (604 aa).

Catalysis depends on Cys2, which acts as the Nucleophile; for GATase activity. Positions Cys2–Asp218 constitute a Glutamine amidotransferase type-2 domain. 2 SIS domains span residues Ile284 to Lys423 and Val456 to Pro594. Lys599 functions as the For Fru-6P isomerization activity in the catalytic mechanism.

In terms of assembly, homodimer.

The protein resides in the cytoplasm. It carries out the reaction D-fructose 6-phosphate + L-glutamine = D-glucosamine 6-phosphate + L-glutamate. Its function is as follows. Catalyzes the first step in hexosamine metabolism, converting fructose-6P into glucosamine-6P using glutamine as a nitrogen source. This chain is Glutamine--fructose-6-phosphate aminotransferase [isomerizing], found in Streptococcus agalactiae serotype III (strain NEM316).